Reading from the N-terminus, the 208-residue chain is Histone H1t (208 aa).

Residues 1–12 show a composition bias toward polar residues; that stretch reads MSETAPAASSTL. A disordered region spans residues 1-39; it reads MSETAPAASSTLVPAPVEKPSSKRRGKKPGLAPARKPRG. Ser-9 carries the phosphoserine modification. Residues 38–111 form the H15 domain; it reads RGFSVSKLIP…GASGSFKLSK (74 aa). Arg-56 bears the Citrulline mark. A disordered region spans residues 95 to 208; that stretch reads LVQTKGTGAS…TDLRKAAGRK (114 aa). Residues 121 to 134 show a composition bias toward basic residues; it reads KGKKSASAKAKKMG. Ser-141 bears the Phosphoserine mark. Residues 143-154 are compositionally biased toward basic residues; the sequence is KSSKTKAVKKPK. A Phosphothreonine modification is found at Thr-156. 2 positions are modified to phosphoserine: Ser-163 and Ser-178. A compositionally biased stretch (basic and acidic residues) spans 199–208; that stretch reads TDLRKAAGRK.

The protein belongs to the histone H1/H5 family. Phosphorylated in early spermatids. Post-translationally, citrullination at Arg-56 (H1R54ci) by PADI4 takes place within the DNA-binding site of H1 and results in its displacement from chromatin and global chromatin decondensation, thereby promoting pluripotency and stem cell maintenance. Testis-specific.

The protein resides in the nucleus. It localises to the chromosome. Its function is as follows. Testis-specific histone H1 that forms less compacted chromatin compared to other H1 histone subtypes. Formation of more relaxed chromatin may be required to promote chromatin architecture required for proper chromosome regulation during meiosis, such as homologous recombination. Histones H1 act as linkers that bind to nucleosomes and compact polynucleosomes into a higher-order chromatin configuration. This Mus musculus (Mouse) protein is Histone H1t.